A 180-amino-acid polypeptide reads, in one-letter code: Segregation and condensation protein B (180 aa).

It belongs to the ScpB family. As to quaternary structure, homodimer. Homodimerization may be required to stabilize the binding of ScpA to the Smc head domains. Component of a cohesin-like complex composed of ScpA, ScpB and the Smc homodimer, in which ScpA and ScpB bind to the head domain of Smc. The presence of the three proteins is required for the association of the complex with DNA.

The protein localises to the cytoplasm. In terms of biological role, participates in chromosomal partition during cell division. May act via the formation of a condensin-like complex containing Smc and ScpA that pull DNA away from mid-cell into both cell halves. This chain is Segregation and condensation protein B, found in Staphylococcus aureus (strain USA300).